Consider the following 357-residue polypeptide: UPF0283 membrane protein BOV_0999 (357 aa).

A disordered region spans residues 1–36 (MSDKTPRKPTAFRLEQPARVSAASEQEEPRRPRAVK). Positions 27–36 (EEPRRPRAVK) are enriched in basic and acidic residues. A run of 2 helical transmembrane segments spans residues 78-98 (ILFG…TEDL) and 109-129 (LGWT…AIIL).

This sequence belongs to the UPF0283 family.

It is found in the cell inner membrane. In Brucella ovis (strain ATCC 25840 / 63/290 / NCTC 10512), this protein is UPF0283 membrane protein BOV_0999.